Reading from the N-terminus, the 362-residue chain is S-adenosylmethionine decarboxylase proenzyme 2 (362 aa).

Catalysis depends on residues glutamate 9 and glutamate 12. A substrate-binding site is contributed by glutamate 68. Serine 69 (schiff-base intermediate with substrate; via pyruvic acid) is an active-site residue. Serine 69 carries the pyruvic acid (Ser); by autocatalysis modification. Catalysis depends on cysteine 83, which acts as the Proton donor; for catalytic activity. Active-site proton acceptor; for processing activity residues include serine 232 and histidine 245. Residue glutamate 249 coordinates substrate.

It belongs to the eukaryotic AdoMetDC family. It depends on pyruvate as a cofactor. Is synthesized initially as an inactive proenzyme. Formation of the active enzyme involves a self-maturation process in which the active site pyruvoyl group is generated from an internal serine residue via an autocatalytic post-translational modification. Two non-identical subunits are generated from the proenzyme in this reaction, and the pyruvate is formed at the N-terminus of the alpha chain, which is derived from the carboxyl end of the proenzyme. The post-translation cleavage follows an unusual pathway, termed non-hydrolytic serinolysis, in which the side chain hydroxyl group of the serine supplies its oxygen atom to form the C-terminus of the beta chain, while the remainder of the serine residue undergoes an oxidative deamination to produce ammonia and the pyruvoyl group blocking the N-terminus of the alpha chain.

It catalyses the reaction S-adenosyl-L-methionine + H(+) = S-adenosyl 3-(methylsulfanyl)propylamine + CO2. Its pathway is amine and polyamine biosynthesis; S-adenosylmethioninamine biosynthesis; S-adenosylmethioninamine from S-adenosyl-L-methionine: step 1/1. Functionally, essential for biosynthesis of the polyamines spermidine and spermine. Essential for polyamine homeostasis, and normal plant embryogenesis, growth and development. This is S-adenosylmethionine decarboxylase proenzyme 2 from Arabidopsis thaliana (Mouse-ear cress).